We begin with the raw amino-acid sequence, 270 residues long: Formamidopyrimidine-DNA glycosylase (270 aa).

Catalysis depends on Pro2, which acts as the Schiff-base intermediate with DNA. The active-site Proton donor is the Glu3. Lys58 (proton donor; for beta-elimination activity) is an active-site residue. DNA-binding residues include His91, Arg109, and Arg151. The segment at 236–270 adopts an FPG-type zinc-finger fold; sequence QVYGKTGQQCPSCETPLKAVKLAARASVYCPECQS. Arg260 acts as the Proton donor; for delta-elimination activity in catalysis.

The protein belongs to the FPG family. In terms of assembly, monomer. Requires Zn(2+) as cofactor.

It catalyses the reaction Hydrolysis of DNA containing ring-opened 7-methylguanine residues, releasing 2,6-diamino-4-hydroxy-5-(N-methyl)formamidopyrimidine.. The catalysed reaction is 2'-deoxyribonucleotide-(2'-deoxyribose 5'-phosphate)-2'-deoxyribonucleotide-DNA = a 3'-end 2'-deoxyribonucleotide-(2,3-dehydro-2,3-deoxyribose 5'-phosphate)-DNA + a 5'-end 5'-phospho-2'-deoxyribonucleoside-DNA + H(+). In terms of biological role, involved in base excision repair of DNA damaged by oxidation or by mutagenic agents. Acts as a DNA glycosylase that recognizes and removes damaged bases. Has a preference for oxidized purines, such as 7,8-dihydro-8-oxoguanine (8-oxoG). Has AP (apurinic/apyrimidinic) lyase activity and introduces nicks in the DNA strand. Cleaves the DNA backbone by beta-delta elimination to generate a single-strand break at the site of the removed base with both 3'- and 5'-phosphates. This chain is Formamidopyrimidine-DNA glycosylase, found in Psychromonas ingrahamii (strain DSM 17664 / CCUG 51855 / 37).